The sequence spans 433 residues: Acetylcholine receptor-like protein cup-4 (433 aa).

The first 24 residues, 1–24 (MKIIIFVCFILIFYLPIQKKHVNS), serve as a signal peptide directing secretion. Asn-41 and Asn-68 each carry an N-linked (GlcNAc...) asparagine glycan. Cys-178 and Cys-192 form a disulfide bridge. 2 N-linked (GlcNAc...) asparagine glycosylation sites follow: Asn-237 and Asn-249. Helical transmembrane passes span 282–302 (EAAV…TFFI), 307–327 (STFL…HDLV), 337–357 (IPFC…TLVL), and 413–433 (PIIG…CLLL).

This sequence belongs to the ligand-gated ion channel (TC 1.A.9) family. Acetylcholine receptor (TC 1.A.9.1) subfamily. Expressed in coelomocytes.

Its subcellular location is the cytoplasmic vesicle membrane. Thought to regulate endocytosis in coelomocytes through modulation of phospholipase C activity. Possible acetylcholine receptor. The polypeptide is Acetylcholine receptor-like protein cup-4 (cup-4) (Caenorhabditis elegans).